A 59-amino-acid polypeptide reads, in one-letter code: Pycsar effector protein MePycTM (59 aa).

Residues 36–56 (VAVAIYLLGAAMLSSGAAVLA) traverse the membrane as a helical segment.

Its subcellular location is the cell membrane. Functionally, pycsar (pyrimidine cyclase system for antiphage resistance) provides immunity against bacteriophage. The pyrimidine cyclase (PycC) synthesizes cyclic nucleotides in response to infection; these serve as specific second messenger signals. The signals activate the adjacent effector, leading to bacterial cell death and abortive phage infection. A clade D Pycsar system. In terms of biological role, the effector gene of a two-gene Pycsar system. Expression of this and adjacent uridylate cyclase MePycC (AC A0A1C5G2V9) probably confers resistance to bacteriophage. The genes are probably only expressed in response to bacteriophage infection. Probably only responds to cUMP (produced by its cognate NTP cyclase), acts by impairing membrane integrity. The protein is Pycsar effector protein MePycTM of Micromonospora echinofusca.